The sequence spans 297 residues: Homoserine kinase (297 aa).

82-92 (PVSRGLGSSAA) contacts ATP.

It belongs to the GHMP kinase family. Homoserine kinase subfamily.

It is found in the cytoplasm. The enzyme catalyses L-homoserine + ATP = O-phospho-L-homoserine + ADP + H(+). The protein operates within amino-acid biosynthesis; L-threonine biosynthesis; L-threonine from L-aspartate: step 4/5. Its function is as follows. Catalyzes the ATP-dependent phosphorylation of L-homoserine to L-homoserine phosphate. In Clostridium botulinum (strain Langeland / NCTC 10281 / Type F), this protein is Homoserine kinase.